The primary structure comprises 161 residues: 3-isopropylmalate dehydratase small subunit (161 aa).

The protein belongs to the LeuD family. LeuD type 2 subfamily. In terms of assembly, heterodimer of LeuC and LeuD.

It catalyses the reaction (2R,3S)-3-isopropylmalate = (2S)-2-isopropylmalate. Its pathway is amino-acid biosynthesis; L-leucine biosynthesis; L-leucine from 3-methyl-2-oxobutanoate: step 2/4. Catalyzes the isomerization between 2-isopropylmalate and 3-isopropylmalate, via the formation of 2-isopropylmaleate. The sequence is that of 3-isopropylmalate dehydratase small subunit from Metallosphaera sedula (strain ATCC 51363 / DSM 5348 / JCM 9185 / NBRC 15509 / TH2).